We begin with the raw amino-acid sequence, 70 residues long: Protein SlyX homolog (70 aa).

The protein belongs to the SlyX family.

This chain is Protein SlyX homolog, found in Shewanella sp. (strain MR-7).